The sequence spans 197 residues: Glycerol-3-phosphate acyltransferase (197 aa).

5 helical membrane-spanning segments follow: residues 2–22, 53–73, 78–98, 112–132, and 152–174; these read LDVI…AIVV, AGIT…LAWL, PVVA…PVYF, VILA…LAVA, and YMLW…AAIV.

It belongs to the PlsY family. Probably interacts with PlsX.

It is found in the cell inner membrane. It carries out the reaction an acyl phosphate + sn-glycerol 3-phosphate = a 1-acyl-sn-glycero-3-phosphate + phosphate. The protein operates within lipid metabolism; phospholipid metabolism. Functionally, catalyzes the transfer of an acyl group from acyl-phosphate (acyl-PO(4)) to glycerol-3-phosphate (G3P) to form lysophosphatidic acid (LPA). This enzyme utilizes acyl-phosphate as fatty acyl donor, but not acyl-CoA or acyl-ACP. This chain is Glycerol-3-phosphate acyltransferase, found in Halorhodospira halophila (strain DSM 244 / SL1) (Ectothiorhodospira halophila (strain DSM 244 / SL1)).